The sequence spans 359 residues: Membrane-bound lytic murein transglycosylase C (359 aa).

The N-terminal stretch at 1–16 (MKKYLALALIAPLLIS) is a signal peptide. Cys-17 carries N-palmitoyl cysteine lipidation. Residue Cys-17 is the site of S-diacylglycerol cysteine attachment.

It belongs to the transglycosylase Slt family.

The protein resides in the cell outer membrane. The catalysed reaction is Exolytic cleavage of the (1-&gt;4)-beta-glycosidic linkage between N-acetylmuramic acid (MurNAc) and N-acetylglucosamine (GlcNAc) residues in peptidoglycan, from either the reducing or the non-reducing ends of the peptidoglycan chains, with concomitant formation of a 1,6-anhydrobond in the MurNAc residue.. In terms of biological role, murein-degrading enzyme. May play a role in recycling of muropeptides during cell elongation and/or cell division. The protein is Membrane-bound lytic murein transglycosylase C of Escherichia fergusonii (strain ATCC 35469 / DSM 13698 / CCUG 18766 / IAM 14443 / JCM 21226 / LMG 7866 / NBRC 102419 / NCTC 12128 / CDC 0568-73).